Consider the following 256-residue polypeptide: 5-keto-4-deoxy-D-glucarate aldolase (256 aa).

The active-site Proton acceptor is the histidine 50. Glutamine 151 serves as a coordination point for substrate. Glutamate 153 is a Mg(2+) binding site. 2 residues coordinate substrate: serine 178 and aspartate 179. A Mg(2+)-binding site is contributed by aspartate 179.

This sequence belongs to the HpcH/HpaI aldolase family. KDGluc aldolase subfamily. As to quaternary structure, homohexamer; trimer of dimers. The cofactor is Mg(2+).

The enzyme catalyses 5-dehydro-4-deoxy-D-glucarate = 2-hydroxy-3-oxopropanoate + pyruvate. It catalyses the reaction 2-dehydro-3-deoxy-D-glucarate = 2-hydroxy-3-oxopropanoate + pyruvate. It functions in the pathway carbohydrate acid metabolism; galactarate degradation; D-glycerate from galactarate: step 2/3. Functionally, catalyzes the reversible retro-aldol cleavage of both 5-keto-4-deoxy-D-glucarate and 2-keto-3-deoxy-D-glucarate to pyruvate and tartronic semialdehyde. In Shigella sonnei (strain Ss046), this protein is 5-keto-4-deoxy-D-glucarate aldolase.